The following is a 235-amino-acid chain: Probable tetraspanin tspA (235 aa).

Over 1–18 (MVDTSNLLPQTPRLLKVP) the chain is Cytoplasmic. Residues 19 to 39 (LIILNIILWILGLVLVIVGGI) form a helical membrane-spanning segment. Topologically, residues 40–68 (CVSFLSNFKDFTKASDAKSALSNLTTSIP) are extracellular. An N-linked (GlcNAc...) asparagine glycan is attached at N62. The helical transmembrane segment at 69 to 89 (AGVLVIGILFVIFTVVGCFVA) threads the bilayer. The Cytoplasmic portion of the chain corresponds to 90–93 (YKEK). Residues 94–114 (LVGLVIYCAVMLILLVILIGV) form a helical membrane-spanning segment. Residues 115-200 (GGKAITLHND…FSSKIYAVGA (86 aa)) are Extracellular-facing. N-linked (GlcNAc...) asparagine glycans are attached at residues N139, N143, and N160. Residues 201–221 (AGLAIGIIELVAILFSLFLII) traverse the membrane as a helical segment. The Cytoplasmic portion of the chain corresponds to 222–235 (RICRSPRTRSYDQY).

Belongs to the tetraspanin (TM4SF) family.

The protein localises to the membrane. The chain is Probable tetraspanin tspA (tspA) from Dictyostelium discoideum (Social amoeba).